A 360-amino-acid polypeptide reads, in one-letter code: Hereditary hemochromatosis protein homolog (360 aa).

Positions M1–P25 are cleaved as a signal peptide. Positions Q26–E127 are alpha-1. Residues Q26–I319 lie on the Extracellular side of the membrane. N-linked (GlcNAc...) asparagine glycans are attached at residues N115, N143, N167, and N247. Residues S128–Q218 form an alpha-2 region. Intrachain disulfides connect C137/C200 and C238/C295. An alpha-3 region spans residues V219–W310. Residues P220–T309 form the Ig-like C1-type domain. The tract at residues E311–I319 is connecting peptide. Residues I320–V340 traverse the membrane as a helical segment. Over L341 to E360 the chain is Cytoplasmic.

Belongs to the MHC class I family. Binds TFR through the extracellular domain in a pH-dependent manner.

Its subcellular location is the cell membrane. Functionally, binds to transferrin receptor (TFR) and reduces its affinity for iron-loaded transferrin. This is Hereditary hemochromatosis protein homolog (Hfe) from Rattus norvegicus (Rat).